Consider the following 423-residue polypeptide: SH2 domain-containing adapter protein F (423 aa).

3 disordered regions span residues 1–87 (MQQE…STTR), 110–208 (DPFD…WEWK), and 225–312 (DLPW…GEWT). Over residues 192–203 (EDDERPPEEYDQ) the composition is skewed to acidic residues. Tyr201 carries the post-translational modification Phosphotyrosine. Residues 323–418 (WYHGAISRTD…AEHMSLLYPV (96 aa)) form the SH2 domain.

As to quaternary structure, interacts with phosphorylated 'Tyr-720' of PDGFRA via its SH2 domain. In terms of processing, may become phosphorylated upon binding to PDGFRA. In terms of tissue distribution, expressed in skeletal muscle, brain, liver, prostate, testis, ovary, small intestine and colon.

In terms of biological role, adapter protein which may play a role in the regulation of apoptosis in response to PDGF. The sequence is that of SH2 domain-containing adapter protein F from Homo sapiens (Human).